The primary structure comprises 259 residues: Chaplin-C (259 aa).

The signal sequence occupies residues 1–28; sequence MRQATRKGLMTMAAATGVIAAAGGAAHA. Positions 39 to 79 constitute a Chaplin 1 domain; that stretch reads SPGVLSGNTVQAPVHVPVNVCGNTVDVVGVLNPAMGNACAN. The segment covering 84–112 has biased composition (gly residues); it reads ASGGHGGHGGHGGYGDSGGEGGSHGGSHA. Disordered regions lie at residues 84–129 and 154–227; these read ASGG…NHVE and GNDC…ALAE. Residues 119–159 form the Chaplin 2 domain; the sequence is SPGVGSGNHVEVPIDVPVNVCGNSIDVVGALNPTTGNDCGN. Residues 180–189 show a composition bias toward low complexity; the sequence is HNPGNPGNPD. The LPXTG sorting signal signature appears at 225-229; that stretch reads LAETG. The residue at position 228 (Thr-228) is a Pentaglycyl murein peptidoglycan amidated threonine. Positions 229-259 are cleaved as a propeptide — removed by sortase; sequence GSDLPLGLALPVGAGALLAGTVLYRKARASV.

The protein belongs to the chaplin family. Long chaplin subfamily.

It is found in the secreted. Its subcellular location is the cell wall. One of 8 partially redundant surface-active proteins required for efficient formation of aerial mycelium; the short chaplins assemble into a hydrophobic, amyloidal fibrillar surface layer that envelopes and protects aerial hyphae and spores, presumably anchored to the long chaplins. Chaplins have an overlapping function with the surface-active SapB peptide; chaplins are essential on minimal medium while on rich medium both chaplins and SapB are required for efficient aerial hyphae formation. A minimal chaplin strain capable of forming aerial mycelium/hyphae on minimal medium contains ChpC, ChpE and ChpH. The strain also has restored rodlet formation on the hyphae surface. The long chaplins (ChpA, ChpB, ChpC) are not absolutely necessary for short chaplin localization or rodlet formation, but probably play a role in initiating aerial hyphae development. Chaplins are also involved in cell attachment to a hydrophobic surface. The sequence is that of Chaplin-C from Streptomyces coelicolor (strain ATCC BAA-471 / A3(2) / M145).